The following is a 350-amino-acid chain: MRKVMKPMKDVGIVGYGAYVPMYRIRNEEIGRVWGVSSFPIEEKAVPGLDEDAITIGIEAARNALKRAKIDPQKIRAIWFGTESKPYAVKPSATIIAEAIGATPDLEAADFEFACKAGTEALQAAIGFVGSGMAEYAMAIGADTAQGRPGDHLEFTAGAGGAAFIVGEKSNESVAYFEGSYSYVTDTPDFWRRQHEHYPRHGNRFTGEPAYFHHIINAAKTLMEELGLKPSDFDYAVFHQPNVKFPLTVAKILGIPKEKVLPGLLTGRIGNTYSGATMVGVSAVLDIAKPGDRILWVSFGSGAGSNAFSIVVQDAIEEKRDLAPKVEDYVKRRKVIDYALYAKARRKYIL.

Glu-83 acts as the Proton donor/acceptor in catalysis. Residue Cys-115 is the Acyl-thioester intermediate of the active site. Residues Cys-115 and Thr-156 each contribute to the (3S)-3-hydroxy-3-methylglutaryl-CoA site. Arg-204 serves as a coordination point for CoA. (3S)-3-hydroxy-3-methylglutaryl-CoA is bound by residues Thr-206 and His-239. His-239 acts as the Proton donor/acceptor in catalysis. Lys-244 lines the CoA pocket. 2 residues coordinate (3S)-3-hydroxy-3-methylglutaryl-CoA: Asn-271 and Ser-301.

Belongs to the thiolase-like superfamily. Archaeal HMG-CoA synthase family. As to quaternary structure, interacts with acetoacetyl-CoA thiolase that catalyzes the precedent step in the pathway and with a DUF35 protein. The acetoacetyl-CoA thiolase/HMG-CoA synthase complex channels the intermediate via a fused CoA-binding site, which allows for efficient coupling of the endergonic thiolase reaction with the exergonic HMGCS reaction.

It carries out the reaction acetoacetyl-CoA + acetyl-CoA + H2O = (3S)-3-hydroxy-3-methylglutaryl-CoA + CoA + H(+). It participates in metabolic intermediate biosynthesis; (R)-mevalonate biosynthesis; (R)-mevalonate from acetyl-CoA: step 2/3. Functionally, catalyzes the condensation of acetyl-CoA with acetoacetyl-CoA to form 3-hydroxy-3-methylglutaryl-CoA (HMG-CoA). Functions in the mevalonate (MVA) pathway leading to isopentenyl diphosphate (IPP), a key precursor for the biosynthesis of isoprenoid compounds that are building blocks of archaeal membrane lipids. This chain is Hydroxymethylglutaryl-CoA synthase, found in Pyrococcus furiosus (strain ATCC 43587 / DSM 3638 / JCM 8422 / Vc1).